We begin with the raw amino-acid sequence, 311 residues long: DNA replication terminus site-binding protein (311 aa).

Belongs to the Tus family.

Its subcellular location is the cytoplasm. Trans-acting protein required for termination of DNA replication. Binds to DNA replication terminator sequences (terA to terF) to prevent the passage of replication forks. The termination efficiency will be affected by the affinity of this protein for the terminator sequence. The polypeptide is DNA replication terminus site-binding protein (Yersinia pseudotuberculosis serotype I (strain IP32953)).